A 617-amino-acid polypeptide reads, in one-letter code: MPAYRSRTSTHGRNMAGARGLWRATGMKDGDFGKPIIAVVNSFTQFVPGHVHLKDLGQLVAREIEKAGGVAKEFNTIAVDDGIAMGHDGMLYSLPSREIIADSVEYMVNAHCADAMVCISNCDKITPGMLMAAMRLNIPAVFVSGGPMEAGKVLLSTGEKKVDLIDAMIAAADDRVSDEDVKVMERSACPTCGSCSGMFTANSMNCLTEALGLALPGNGSVLATHADRERLFVEAGHLVVDLARRYYEQDDAGVLPRTIASFKAFENAMTLDISMGGSTNTVLHLLAAANEGEVPFTMADIDRLSRKVPVLCKVAPAVANIHMEDVHRAGGIMGILGELDRAGLIHTDLPTVHAPSMKDALERWDVTRTKAESVTTFYRAAPGGVPTQVAFSQSRRWDDLDTDRASGVIRDFEHAYSKDGGLAVLFGNIAEDGCIVKTAGVDASILKFTGPARIFESQDAAVEAILANGKIKAGDIVLIRYEGPRGGPGMQEMLYPTSYLKSKGLGKACALVTDGRFSGGSSGLSIGHVSPEAAEGGAIGLVEEGDTIEIDIPNRRIHLAISDEEMARRRAAMEAKGDAAWKPKDRQRVVSQALQAYAALTTSAARGAVRDVKSLRR.

Asp81 contacts Mg(2+). [2Fe-2S] cluster is bound at residue Cys122. 2 residues coordinate Mg(2+): Asp123 and Lys124. Lys124 carries the N6-carboxylysine modification. Cys195 contacts [2Fe-2S] cluster. Residue Glu492 coordinates Mg(2+). Residue Ser518 is the Proton acceptor of the active site.

This sequence belongs to the IlvD/Edd family. As to quaternary structure, homodimer. [2Fe-2S] cluster serves as cofactor. Requires Mg(2+) as cofactor.

It catalyses the reaction (2R)-2,3-dihydroxy-3-methylbutanoate = 3-methyl-2-oxobutanoate + H2O. The catalysed reaction is (2R,3R)-2,3-dihydroxy-3-methylpentanoate = (S)-3-methyl-2-oxopentanoate + H2O. Its pathway is amino-acid biosynthesis; L-isoleucine biosynthesis; L-isoleucine from 2-oxobutanoate: step 3/4. It participates in amino-acid biosynthesis; L-valine biosynthesis; L-valine from pyruvate: step 3/4. Functions in the biosynthesis of branched-chain amino acids. Catalyzes the dehydration of (2R,3R)-2,3-dihydroxy-3-methylpentanoate (2,3-dihydroxy-3-methylvalerate) into 2-oxo-3-methylpentanoate (2-oxo-3-methylvalerate) and of (2R)-2,3-dihydroxy-3-methylbutanoate (2,3-dihydroxyisovalerate) into 2-oxo-3-methylbutanoate (2-oxoisovalerate), the penultimate precursor to L-isoleucine and L-valine, respectively. The protein is Dihydroxy-acid dehydratase of Azorhizobium caulinodans (strain ATCC 43989 / DSM 5975 / JCM 20966 / LMG 6465 / NBRC 14845 / NCIMB 13405 / ORS 571).